The chain runs to 262 residues: Alpha-tubulin N-acetyltransferase 1 (262 aa).

An N-acetyltransferase domain is found at 1 to 177; the sequence is MQVDADLRPI…TNFVVFEELF (177 aa). Residue 111 to 124 coordinates acetyl-CoA; the sequence is FYVHFSCQRQGVGQ.

It belongs to the acetyltransferase ATAT1 family. Expressed solely in touch receptor neurons.

The catalysed reaction is L-lysyl-[alpha-tubulin] + acetyl-CoA = N(6)-acetyl-L-lysyl-[alpha-tubulin] + CoA + H(+). Its function is as follows. Specifically acetylates 'Lys-40' in alpha-tubulin/mec-12 on the lumenal side of microtubules. Promotes microtubule destabilization and accelerates microtubule dynamics; this activity may be independent of acetylation activity. Acetylates alpha-tubulin with a slow enzymatic rate, due to a catalytic site that is not optimized for acetyl transfer. Enters the microtubule through each end and diffuses quickly throughout the lumen of microtubules. Acetylates only long/old microtubules because of its slow acetylation rate since it does not have time to act on dynamically unstable microtubules before the enzyme is released. Required for the maintenance of touch receptor neurons and possibly other type of neurons involved in locomotion. Regulates the number and localization of mitochondria in mechanosensory neurons. Plays a role in axonal transport. In Caenorhabditis elegans, this protein is Alpha-tubulin N-acetyltransferase 1.